We begin with the raw amino-acid sequence, 278 residues long: Formamidopyrimidine-DNA glycosylase (278 aa).

Residue proline 2 is the Schiff-base intermediate with DNA of the active site. Residue glutamate 3 is the Proton donor of the active site. Lysine 60 acts as the Proton donor; for beta-elimination activity in catalysis. Positions 95 and 114 each coordinate DNA. The FPG-type zinc-finger motif lies at 244–278 (WVYRRGGEPCRRCGTIIRRDKLSGRSTHWCPTCQG). The active-site Proton donor; for delta-elimination activity is the arginine 268.

It belongs to the FPG family. As to quaternary structure, monomer. Requires Zn(2+) as cofactor.

It catalyses the reaction Hydrolysis of DNA containing ring-opened 7-methylguanine residues, releasing 2,6-diamino-4-hydroxy-5-(N-methyl)formamidopyrimidine.. The catalysed reaction is 2'-deoxyribonucleotide-(2'-deoxyribose 5'-phosphate)-2'-deoxyribonucleotide-DNA = a 3'-end 2'-deoxyribonucleotide-(2,3-dehydro-2,3-deoxyribose 5'-phosphate)-DNA + a 5'-end 5'-phospho-2'-deoxyribonucleoside-DNA + H(+). Functionally, involved in base excision repair of DNA damaged by oxidation or by mutagenic agents. Acts as a DNA glycosylase that recognizes and removes damaged bases. Has a preference for oxidized purines, such as 7,8-dihydro-8-oxoguanine (8-oxoG). Has AP (apurinic/apyrimidinic) lyase activity and introduces nicks in the DNA strand. Cleaves the DNA backbone by beta-delta elimination to generate a single-strand break at the site of the removed base with both 3'- and 5'-phosphates. In Parasynechococcus marenigrum (strain WH8102), this protein is Formamidopyrimidine-DNA glycosylase.